Consider the following 103-residue polypeptide: MIVTTTPNIEGYQIATYHGIVTGEAILGANVIRDLFAGITDFIGGRSGAYEKELGRARETALSEMEEAARAKGANAVVGVDLDYEVINNMLMVSASGTAVTIA.

It belongs to the UPF0145 family.

The sequence is that of UPF0145 protein RSKD131_1772 from Cereibacter sphaeroides (strain KD131 / KCTC 12085) (Rhodobacter sphaeroides).